A 231-amino-acid polypeptide reads, in one-letter code: ATP phosphoribosyltransferase (231 aa).

It belongs to the ATP phosphoribosyltransferase family. Short subfamily. As to quaternary structure, heteromultimer composed of HisG and HisZ subunits.

The protein localises to the cytoplasm. It catalyses the reaction 1-(5-phospho-beta-D-ribosyl)-ATP + diphosphate = 5-phospho-alpha-D-ribose 1-diphosphate + ATP. Its pathway is amino-acid biosynthesis; L-histidine biosynthesis; L-histidine from 5-phospho-alpha-D-ribose 1-diphosphate: step 1/9. Catalyzes the condensation of ATP and 5-phosphoribose 1-diphosphate to form N'-(5'-phosphoribosyl)-ATP (PR-ATP). Has a crucial role in the pathway because the rate of histidine biosynthesis seems to be controlled primarily by regulation of HisG enzymatic activity. This chain is ATP phosphoribosyltransferase (hisG), found in Rhizobium etli (strain CIAT 652).